A 267-amino-acid polypeptide reads, in one-letter code: MKKHTDQPIADVQGSPDTRHIAIDRVGIKAIRHPVLVADKDGGSQHTVAQFNMYVNLPHNFKGTHMSRFVEILNSHEREISVESFEEILRSMVSRLESDSGHIEMTFPYFVNKSAPISGVKSLLDYEVTFIGEIKHGDQYGFTMKVIVPVTSLCPCSKKISDYGAHNQRSHVTISVHTNSFVWIEDVIRIAEEQASCELFGLLKRPDEKYVTEKAYNNPKFVEDIVRDVAEILNHDDRIDAYVVESENFESIHNHSAYALIERDKRK.

The protein belongs to the GTP cyclohydrolase IV family.

It catalyses the reaction GTP + H2O = 7,8-dihydroneopterin 3'-triphosphate + formate + H(+). It participates in cofactor biosynthesis; 7,8-dihydroneopterin triphosphate biosynthesis; 7,8-dihydroneopterin triphosphate from GTP: step 1/1. Functionally, converts GTP to 7,8-dihydroneopterin triphosphate. This is GTP cyclohydrolase FolE2 from Nitrosomonas eutropha (strain DSM 101675 / C91 / Nm57).